Consider the following 175-residue polypeptide: Crossover junction endodeoxyribonuclease RuvC (175 aa).

Active-site residues include Asp-7, Glu-68, and Asp-141. The Mg(2+) site is built by Asp-7, Glu-68, and Asp-141.

The protein belongs to the RuvC family. In terms of assembly, homodimer which binds Holliday junction (HJ) DNA. The HJ becomes 2-fold symmetrical on binding to RuvC with unstacked arms; it has a different conformation from HJ DNA in complex with RuvA. In the full resolvosome a probable DNA-RuvA(4)-RuvB(12)-RuvC(2) complex forms which resolves the HJ. Mg(2+) is required as a cofactor.

Its subcellular location is the cytoplasm. The enzyme catalyses Endonucleolytic cleavage at a junction such as a reciprocal single-stranded crossover between two homologous DNA duplexes (Holliday junction).. Its function is as follows. The RuvA-RuvB-RuvC complex processes Holliday junction (HJ) DNA during genetic recombination and DNA repair. Endonuclease that resolves HJ intermediates. Cleaves cruciform DNA by making single-stranded nicks across the HJ at symmetrical positions within the homologous arms, yielding a 5'-phosphate and a 3'-hydroxyl group; requires a central core of homology in the junction. The consensus cleavage sequence is 5'-(A/T)TT(C/G)-3'. Cleavage occurs on the 3'-side of the TT dinucleotide at the point of strand exchange. HJ branch migration catalyzed by RuvA-RuvB allows RuvC to scan DNA until it finds its consensus sequence, where it cleaves and resolves the cruciform DNA. This is Crossover junction endodeoxyribonuclease RuvC from Salinispora arenicola (strain CNS-205).